The following is a 3011-amino-acid chain: Genome polyprotein (3011 aa).

The residue at position 2 (serine 2) is an N-acetylserine; by host. The segment at 2–23 is interaction with STAT1; it reads STNPKPQKKNKRNTNRRPQDVK. The interval 2–58 is interaction with EIF2AK2/PKR; that stretch reads STNPKPQKKNKRNTNRRPQDVKFPGGGQIVGGVYLLPRRGPRLGVRATRKTSERSQP. Positions 2 to 59 are interaction with DDX3X; sequence STNPKPQKKNKRNTNRRPQDVKFPGGGQIVGGVYLLPRRGPRLGVRATRKTSERSQPR. The tract at residues 2-75 is disordered; sequence STNPKPQKKN…PKARRPEGRT (74 aa). Residues 2-168 lie on the Cytoplasmic side of the membrane; it reads STNPKPQKKN…EDGVNYATGN (167 aa). Short sequence motifs (nuclear localization signal) lie at residues 5–13 and 38–43; these read PKPQKKNKR and PRRGPR. A compositionally biased stretch (basic residues) spans 7–16; that stretch reads PQKKNKRNTN. The span at 32 to 47 shows a compositional bias: low complexity; that stretch reads GGVYLLPRRGPRLGVR. Phosphoserine; by host is present on serine 53. 2 consecutive short sequence motifs (nuclear localization signal) follow at residues 58–64 and 66–71; these read PRGRRQP and PKARRP. A compositionally biased stretch (basic residues) spans 58–68; sequence PRGRRQPIPKA. Position 99 is a phosphoserine; by host (serine 99). The interval 112 to 152 is important for endoplasmic reticulum and mitochondrial localization; that stretch reads PRRRSRNLGKVIDTLTCGFADLMGYIPLVGAPLGGAARALA. Residue serine 116 is modified to Phosphoserine; by host PKA. An interaction with APOA2 region spans residues 122–173; that stretch reads VIDTLTCGFADLMGYIPLVGAPLGGAARALAHGVRVLEDGVNYATGNLPGCS. An important for lipid droplets localization region spans residues 164-167; sequence YATG. Residues 169–189 form a helical membrane-spanning segment; sequence LPGCSFSIFLLALLSCLTVPA. Residues 178-191 constitute a propeptide, ER anchor for the core protein, removed in mature form by host signal peptidase; that stretch reads LLALLSCLTVPASA. The Lumenal portion of the chain corresponds to 190–358; that stretch reads SAYQVRNSTG…AGAHWGVLAG (169 aa). N-linked (GlcNAc...) asparagine; by host glycans are attached at residues asparagine 196, asparagine 209, and asparagine 234. Residues 265-296 form an important for fusion region; that stretch reads LVGSATLCSALYVGDLCGSVFLVGQLFTFSPR. N-linked (GlcNAc...) asparagine; by host glycosylation is present at asparagine 305. A helical membrane pass occupies residues 359–379; the sequence is IAYFSMVGNWAKVLVVLLLFA. Residues 380-725 lie on the Lumenal side of the membrane; that stretch reads GVDAETHVTG…WEYVVLLFLL (346 aa). An HVR1 region spans residues 385 to 411; it reads THVTGGSAGHTVSGFVSLLAPGAKQNV. N-linked (GlcNAc...) (high mannose) asparagine; by host glycosylation is found at asparagine 417, asparagine 423, asparagine 430, and asparagine 448. Disulfide bonds link cysteine 429–cysteine 552, cysteine 452–cysteine 459, cysteine 486–cysteine 494, and cysteine 503–cysteine 508. The segment at 474 to 480 is HVR2; sequence YANGSGP. The N-linked (GlcNAc...) asparagine; by host glycan is linked to asparagine 476. Positions 481–493 are CD81-binding 1; sequence DQRPYCWHYPPKP. The N-linked (GlcNAc...) (high mannose) asparagine; by host glycan is linked to asparagine 532. The CD81-binding 2 stretch occupies residues 543–551; sequence RPPLGNWFG. The N-linked (GlcNAc...) (high mannose) asparagine; by host glycan is linked to asparagine 556. Residues cysteine 564 and cysteine 569 are joined by a disulfide bond. N-linked (GlcNAc...) (high mannose) asparagine; by host glycosylation is present at asparagine 576. Cystine bridges form between cysteine 581/cysteine 585, cysteine 597/cysteine 620, and cysteine 607/cysteine 644. Asparagine 623 and asparagine 645 each carry an N-linked (GlcNAc...) (high mannose) asparagine; by host glycan. The cysteines at positions 652 and 677 are disulfide-linked. Residues 660–671 form an EIF2AK2/eIF2-alpha phosphorylation homology domain (PePHD) region; it reads SELSPLLLTTTQ. Residues 726-746 traverse the membrane as a helical segment; it reads LADARVCSCLWMMLLISQAEA. Topologically, residues 747 to 757 are lumenal; that stretch reads ALENLVILNAA. A helical transmembrane segment spans residues 758–778; it reads SLAGTHGLVSFLVFFCFAWYL. The Cytoplasmic segment spans residues 779-781; sequence KGK. The helical transmembrane segment at 782 to 803 threads the bilayer; the sequence is WVPGAVYTFYGMWPLLLLLLAL. Residues 804–813 are Lumenal-facing; the sequence is PQRAYALDTE. A helical transmembrane segment spans residues 814 to 834; that stretch reads VAASCGGVVLVGLMALTLSPY. Topologically, residues 835 to 838 are cytoplasmic; sequence YKRY. A helical transmembrane segment spans residues 839–859; that stretch reads ISWCLWWLQYFLTRVEAQLHV. Over 860–881 the chain is Lumenal; sequence WIPPLNVRGGRDAVILLMCAVH. A helical transmembrane segment spans residues 882 to 902; sequence PTLVFDITKLLLAVFGPLWIL. Residues 899-1026 enclose the Peptidase C18 domain; sequence LWILQASLLK…GMVSKGWRLL (128 aa). Over 903 to 1657 the chain is Cytoplasmic; that stretch reads QASLLKVPYF…CMSADLEVVT (755 aa). The protease NS2-3 stretch occupies residues 904–1206; sequence ASLLKVPYFV…PVENLETTMR (303 aa). Cysteine 922 is lipidated: S-palmitoyl cysteine; by host. Residues 929–949 form an interaction with host SCPS1 region; it reads IGGHYVQMVIIKLGALTGTYV. Residues histidine 952, glutamate 972, and cysteine 993 each act as for protease NS2 activity; shared with dimeric partner in the active site. Positions 1027-1208 constitute a Peptidase S29 domain; that stretch reads APITAYAQQT…ENLETTMRSP (182 aa). Residues histidine 1083 and aspartate 1107 each act as charge relay system; for serine protease NS3 activity in the active site. Zn(2+)-binding residues include cysteine 1123 and cysteine 1125. Serine 1165 serves as the catalytic Charge relay system; for serine protease NS3 activity. 2 residues coordinate Zn(2+): cysteine 1171 and histidine 1175. A Helicase ATP-binding domain is found at 1217-1369; the sequence is PVVPQSFQVA…PNIEEVALST (153 aa). 1230–1237 is an ATP binding site; the sequence is APTGSGKS. Mg(2+)-binding residues include serine 1237 and glutamate 1317. The short motif at 1316–1319 is the DECH box element; sequence DECH. The segment at 1486-1497 is RNA-binding; the sequence is QRRGRTGRGKPG. A helical membrane pass occupies residues 1658-1678; sequence STWVLVGGVLAALAAYCLSTG. Residues 1679–1690 form an NS3-binding region; sequence CVVIVGRVVLSG. The Cytoplasmic segment spans residues 1679–1805; it reads CVVIVGRVVL…AVTSPLTTSQ (127 aa). The chain crosses the membrane as a helical span at residues 1806–1826; the sequence is TLLFNILGGWVAAQLAAPGAA. Topologically, residues 1827–1828 are lumenal; that stretch reads TA. Residues 1829–1849 form a helical membrane-spanning segment; that stretch reads FVGAGLAGAAIGSVGLGKVLI. The interval 1833–1861 is glycine zipper; it reads GLAGAAIGSVGLGKVLIDILAGYGAGVAG. Residue aspartate 1850 is a topological domain, cytoplasmic. The chain crosses the membrane as a helical span at residues 1851-1871; that stretch reads ILAGYGAGVAGALVAFKIMSG. At 1872–1881 the chain is on the lumenal side; sequence EVPSTEDLVN. Residues 1882 to 1902 form a helical membrane-spanning segment; that stretch reads LLPAILSPGALVVGVVCAAIL. At 1903–1972 the chain is on the cytoplasmic side; sequence RRHVGPGEGA…WISSECTTPC (70 aa). 2 S-palmitoyl cysteine; by host lipidation sites follow: cysteine 1968 and cysteine 1972. Residues 1973–2003 lie within the membrane without spanning it; the sequence is SGSWLRDIWDWICEVLSDFKTWLKAKLMPQL. Positions 1978 to 1998 are membrane-binding; it reads RDIWDWICEVLSDFKTWLKAK. Topologically, residues 2004 to 2990 are cytoplasmic; it reads PGIPFVSCQR…YHSVSHARPR (987 aa). The tract at residues 2005-2221 is RNA-binding; the sequence is GIPFVSCQRG…KATCTANHDS (217 aa). Zn(2+) is bound by residues cysteine 2011, cysteine 2029, cysteine 2031, and cysteine 2052. Residues 2120 to 2208 are FKBP8-binding; the sequence is EFFTELDGVR…ASSSASQLSA (89 aa). The tract at residues 2120 to 2332 is transcriptional activation; sequence EFFTELDGVR…PVPPPRKKRT (213 aa). The segment at 2135-2139 is interaction with non-structural protein 4A; it reads PPCKP. The tract at residues 2189–2441 is interaction with host SKP2; it reads RLARGSPPSV…TPCAAEEQKL (253 aa). Residue serine 2194 is modified to Phosphoserine; by host; in p56. Residues serine 2197, serine 2201, serine 2204, serine 2207, and serine 2210 each carry the phosphoserine; by host; in p58 modification. Positions 2206-2245 are ISDR; it reads LSAPSLKATCTANHDSPDAELIEANLLWRQEMGGNITRVE. Residues 2210-2275 form an EIF2AK2/PKR-binding region; it reads SLKATCTANH…REISVPAEIL (66 aa). An NS4B-binding region spans residues 2249-2306; it reads KVVILDSFDPLVAEEDEREISVPAEILRKSRRFAQALPVWARPDYNPPLVETWKKPDY. Disordered regions lie at residues 2312 to 2334 and 2351 to 2408; these read HGCP…RTVV and SFGS…WSTV. Pro residues predominate over residues 2315–2326; it reads PLPPPKSPPVPP. Serine 2321 carries the post-translational modification Phosphoserine; by host. The SH3-binding motif lies at 2322–2325; sequence PPVP. The short motif at 2326–2334 is the Nuclear localization signal element; the sequence is PPRKKRTVV. The interval 2332–2441 is interaction with host IFI27; the sequence is TVVLTESTLS…TPCAAEEQKL (110 aa). Over residues 2351–2369 the composition is skewed to low complexity; sequence SFGSSSTSGITGDNTTTSS. The interval 2354–2377 is V3; it reads SSSTSGITGDNTTTSSEPAPSGCP. Phosphoserine; by host occurs at positions 2449 and 2462. Residues 2634 to 2752 form the RdRp catalytic domain; sequence PMGFSYDTRC…ICESAGVQED (119 aa). Aspartate 2640, aspartate 2738, and aspartate 2739 together coordinate Mg(2+). The helical transmembrane segment at 2991-3011 threads the bilayer; that stretch reads WIWFCLLLLAAGVGIYLLPNR.

Belongs to the hepacivirus polyprotein family. Homooligomer. Interacts with E1 (via C-terminus). Interacts with the non-structural protein 5A. Interacts (via N-terminus) with host STAT1 (via SH2 domain); this interaction results in decreased STAT1 phosphorylation and ubiquitin-mediated proteasome-dependent STAT1 degradation, leading to decreased IFN-stimulated gene transcription. Interacts with host STAT3; this interaction constitutively activates STAT3. Interacts with host LTBR receptor. Interacts with host TNFRSF1A receptor and possibly induces apoptosis. Interacts with host HNRPK. Interacts with host YWHAE. Interacts with host UBE3A/E6AP. Interacts with host DDX3X. Interacts with host APOA2. Interacts with host RXRA protein. Interacts with host SP110 isoform 3/Sp110b; this interaction sequesters the transcriptional corepressor SP110 away from the nucleus. Interacts with host CREB3 nuclear transcription protein; this interaction triggers cell transformation. Interacts with host ACY3. Interacts with host C1QR1. Interacts with host RBM24; this interaction, which enhances the interaction of the mature core protein with 5'-UTR, may inhibit viral translation and favor replication. Interacts with host EIF2AK2/PKR; this interaction induces the autophosphorylation of EIF2AK2. Part of the viral assembly initiation complex composed of NS2, E1, E2, NS3, NS4A, NS5A and the mature core protein. In terms of assembly, forms a heterodimer with envelope glycoprotein E2. Interacts with mature core protein. Interacts with protease NS2. The heterodimer E1/E2 interacts with host CLDN1; this interaction plays a role in viral entry into host cell. Interacts with host SPSB2 (via C-terminus). Part of the viral assembly initiation complex composed of NS2, E1, E2, NS3, NS4A, NS5A and the mature core protein. Interacts with host NEURL3; this interaction prevents E1 binding to glycoprotein E2. As to quaternary structure, forms a heterodimer with envelope glycoprotein E1. Interacts with host CD81 and SCARB1 receptors; these interactions play a role in viral entry into host cell. Interacts with host EIF2AK2/PKR; this interaction inhibits EIF2AK2 and probably allows the virus to evade the innate immune response. Interacts with host CD209/DC-SIGN and CLEC4M/DC-SIGNR. Interact with host SPCS1; this interaction is essential for viral particle assembly. Interacts with protease NS2. The heterodimer E1/E2 interacts with host CLDN1; this interaction plays a role in viral entry into host cell. Part of the viral assembly initiation complex composed of NS2, E1, E2, NS3, NS4A, NS5A and the mature core protein. Interacts with host SLC3A2/4F2hc; the interaction may facilitate viral entry into host cell. Interacts with human PLSCR1. Homohexamer. Homoheptamer. Interacts with protease NS2. In terms of assembly, homodimer. Interacts with host SPCS1; this interaction is essential for viral particle assembly. Interacts with envelope glycoprotein E1. Interacts with envelope glycoprotein E2. Interacts with viroporin p7. Interacts with serine protease/helicase NS3. Part of the replication complex composed of NS2, NS3, NS4A, NS4B, NS5A and the RNA-directed RNA polymerase embedded in an ER-derived membranous web. Part of the viral assembly initiation complex composed of NS2, E1, E2, NS3, NS4A, NS5A and the mature core protein. As to quaternary structure, interacts with protease NS2. Interacts with non-structural protein 4A; this interaction stabilizes the folding of NS3 serine protease. NS3-NS4A interaction is essential for NS3 activation and allows membrane anchorage of the latter. NS3/NS4A complex also prevents phosphorylation of host IRF3, thus preventing the establishment of dsRNA induced antiviral state. Interacts with host MAVS; this interaction leads to the cleavage and inhibition of host MAVS. Interacts with host TICAM1; this interaction leads to the cleavage and inhibition of host TICAM1. Interacts with host TANK-binding kinase/TBK1; this interaction results in the inhibition of the association between TBK1 and IRF3, which leads to the inhibition of IRF3 activation. Interacts with host RBM24. Part of the replication complex composed of NS2, NS3, NS4A, NS4B, NS5A and the RNA-directed RNA polymerase embedded in an ER-derived membranous web. Part of the viral assembly initiation complex composed of NS2, E1, E2, NS3, NS4A, NS5A and the mature core protein. Interacts with NS3 serine protease; this interaction stabilizes the folding of NS3 serine protease. NS3-NS4A interaction is essential for NS3 activation and allows membrane anchorage of the latter. Interacts with non-structural protein 5A (via N-terminus). Part of the replication complex composed of NS2, NS3, NS4A, NS4B, NS5A and the RNA-directed RNA polymerase embedded in an ER-derived membranous web. Part of the viral assembly initiation complex composed of NS2, E1, E2, NS3, NS4A, NS5A and the mature core protein. In terms of assembly, homomultimer. Interacts with non-structural protein NS5A. Interacts with host PLA2G4C; this interaction likely initiates the recruitment of replication complexes to lipid droplets. Interacts with host STING; this interaction disrupts the interaction between STING and TBK1 thereby suppressing the interferon signaling. Part of the replication complex composed of NS2, NS3, NS4A, NS4B, NS5A and the RNA-directed RNA polymerase embedded in an ER-derived membranous web. As to quaternary structure, monomer. Homodimer; dimerization is required for RNA-binding. Interacts with mature core protein. Interacts (via N-terminus) with non-structural protein 4A. Interacts with non-structural protein 4B. Interacts with RNA-directed RNA polymerase. Part of the viral assembly initiation complex composed of NS2, E1, E2, NS3, NS4A, NS5A and the mature core protein. Part of the replication complex composed of NS2, NS3, NS4A, NS4B, NS5A and the RNA-directed RNA polymerase. Interacts with host GRB2. Interacts with host BIN1. Interacts with host PIK3R1. Interacts with host SRCAP. Interacts with host FKBP8. Interacts with host VAPB. Interacts with host EIF2AK2/PKR; this interaction leads to disruption of EIF2AK2 dimerization by NS5A and probably allows the virus to evade the innate immune response. Interacts (via N-terminus) with host PACSIN2 (via N-terminus); this interaction attenuates protein kinase C alpha-mediated phosphorylation of PACSIN2 by disrupting the interaction between PACSIN2 and PRKCA. Interacts (via N-terminus) with host SRC kinase (via SH2 domain). Interacts with most Src-family kinases. Interacts with host IFI27 and SKP2; promotes the ubiquitin-mediated proteasomal degradation of NS5A. Interacts with host GPS2. Interacts with host TNFRSF21; this interaction allows the modulation by the virus of JNK, p38 MAPK, STAT3, and Akt signaling pathways in a DR6-dependent manner. Interacts (via N-terminus) with host CIDEB (via N-terminus); this interaction seems to regulate the association of HCV particles with APOE. Interacts with host CHKA/Choline Kinase-alpha; CHKA bridges host PI4KA and NS5A and potentiates NS5A-stimulated PI4KA activity, which then facilitates the targeting of the ternary complex to the ER for viral replication. Interacts with host SPSB2 (via C-terminus); this interaction targets NS5A for ubiquitination and degradation. Interacts with host RAB18; this interaction may promote the association of NS5A and other replicase components with lipid droplets. Interacts with host TRIM14; this interaction induces the degradation of NS5A. Homooligomer. Interacts with non-structural protein 5A. Interacts with host VAPB. Interacts with host PRK2/PKN2. Interacts with host HNRNPA1 and SEPT6; these interactions facilitate viral replication. Part of the replication complex composed of NS2, NS3, NS4A, NS4B, NS5A and the RNA-directed RNA polymerase. Initiates RNA transcription/replication at a flavin adenine dinucleotide (FAD), resulting in a 5'- FAD cap on viral RNAs. In this way, recognition of viral 5' RNA by host pattern recognition receptors can be bypassed, thereby evading activation of antiviral pathways. Requires Zn(2+) as cofactor. The cofactor is Mg(2+). Post-translationally, specific enzymatic cleavages in vivo yield mature proteins. The structural proteins, core, E1, E2 and p7 are produced by proteolytic processing by host signal peptidases. The core protein precursor is synthesized as a 23 kDa protein which is retained in the ER membrane through the hydrophobic signal peptide. Cleavage by the signal peptidase releases the 21 kDa mature core protein. The cleavage of the core protein precursor occurs between aminoacids 176 and 188 but the exact cleavage site is not known. Some degraded forms of the core protein appear as well during the course of infection. The other proteins (p7, NS2, NS3, NS4A, NS4B, NS5A and NS5B) are cleaved by the viral proteases. Autoprocessing between NS2 and NS3 is mediated by the NS2 cysteine protease catalytic domain and regulated by the NS3 N-terminal domain. In terms of processing, phosphorylated by host PKC and PKA. Ubiquitinated; mediated by UBE3A and leading to core protein subsequent proteasomal degradation. Post-translationally, highly N-glycosylated. In terms of processing, palmitoylation is required for NS2/3 autoprocessing and E2 recruitment to membranes. Palmitoylated. This modification may play a role in its polymerization or in protein-protein interactions. Post-translationally, cleaved by host caspases which are probably activated by the viral infection. In terms of processing, ubiquitinated. Ubiquitination, most probably at Lys-2350, mediated by host IFI27 and SKP2 leads to proteasomal degradation, restricting viral infection. Phosphorylated on serines in a basal form termed p56. p58 is a hyperphosphorylated form of p56. p56 and p58 coexist in the cell in roughly equivalent amounts. Hyperphosphorylation is dependent on the presence of NS4A. Host CSNK1A1/CKI-alpha or RPS6KB1 kinases may be responsible for NS5A phosphorylation. Phosphorylated NS5A is involved in viral replication. Post-translationally, tyrosine phosphorylation is essential for the interaction with host SRC. In terms of processing, the N-terminus is phosphorylated by host PRK2/PKN2.

The protein localises to the host endoplasmic reticulum membrane. The protein resides in the host mitochondrion membrane. Its subcellular location is the virion. It localises to the host cytoplasm. It is found in the host nucleus. The protein localises to the host lipid droplet. The protein resides in the virion membrane. Its subcellular location is the host mitochondrion. It localises to the host cell membrane. It is found in the host perinuclear region. It carries out the reaction Hydrolysis of four peptide bonds in the viral precursor polyprotein, commonly with Asp or Glu in the P6 position, Cys or Thr in P1 and Ser or Ala in P1'.. The catalysed reaction is a ribonucleoside 5'-triphosphate + H2O = a ribonucleoside 5'-diphosphate + phosphate + H(+). It catalyses the reaction ATP + H2O = ADP + phosphate + H(+). The enzyme catalyses RNA(n) + a ribonucleoside 5'-triphosphate = RNA(n+1) + diphosphate. Its activity is regulated as follows. Inhibited by the antiviral drug hexamethylene amiloride. Inhibition by amantadine appears to be genotype-dependent. Also inhibited by long-alkyl-chain iminosugar derivatives. With respect to regulation, activity is up-regulated by PRK2/PKN2-mediated phosphorylation. Functionally, packages viral RNA to form a viral nucleocapsid, and promotes virion budding. Participates in the viral particle production as a result of its interaction with the non-structural protein 5A. Binds RNA and may function as a RNA chaperone to induce the RNA structural rearrangements taking place during virus replication. Modulates viral translation initiation by interacting with viral IRES and 40S ribosomal subunit. Affects various cell signaling pathways, host immunity and lipid metabolism. Prevents the establishment of cellular antiviral state by blocking the interferon-alpha/beta (IFN-alpha/beta) and IFN-gamma signaling pathways and by blocking the formation of phosphorylated STAT1 and promoting ubiquitin-mediated proteasome-dependent degradation of STAT1. Activates STAT3 leading to cellular transformation. Regulates the activity of cellular genes, including c-myc and c-fos. May repress the promoter of p53, and sequester CREB3 and SP110 isoform 3/Sp110b in the cytoplasm. Represses cell cycle negative regulating factor CDKN1A, thereby interrupting an important check point of normal cell cycle regulation. Targets transcription factors involved in the regulation of inflammatory responses and in the immune response: suppresses TNF-induced NF-kappa-B activation, and activates AP-1. Binds to dendritic cells (DCs) via C1QR1, resulting in down-regulation of T-lymphocytes proliferation. Alters lipid metabolism by interacting with hepatocellular proteins involved in lipid accumulation and storage. Induces up-regulation of FAS promoter activity, and thereby contributes to the increased triglyceride accumulation in hepatocytes (steatosis). Forms a heterodimer with envelope glycoprotein E2, which mediates virus attachment to the host cell, virion internalization through clathrin-dependent endocytosis and fusion with host membrane. Fusion with the host cell is most likely mediated by both E1 and E2, through conformational rearrangements of the heterodimer required for fusion rather than a classical class II fusion mechanism. E1/E2 heterodimer binds host apolipoproteins such as APOB and APOE thereby forming a lipo-viro-particle (LVP). APOE associated to the LVP allows the initial virus attachment to cell surface receptors such as the heparan sulfate proteoglycans (HSPGs), syndecan-1 (SDC1), syndecan-1 (SDC2), the low-density lipoprotein receptor (LDLR) and scavenger receptor class B type I (SCARB1). The cholesterol transfer activity of SCARB1 allows E2 exposure and binding of E2 to SCARB1 and the tetraspanin CD81. E1/E2 heterodimer binding on CD81 activates the epithelial growth factor receptor (EGFR) signaling pathway. Diffusion of the complex E1-E2-EGFR-SCARB1-CD81 to the cell lateral membrane allows further interaction with Claudin 1 (CLDN1) and occludin (OCLN) to finally trigger HCV entry. In terms of biological role, forms a heterodimer with envelope glycoprotein E1, which mediates virus attachment to the host cell, virion internalization through clathrin-dependent endocytosis and fusion with host membrane. Fusion with the host cell is most likely mediated by both E1 and E2, through conformational rearrangements of the heterodimer required for fusion rather than a classical class II fusion mechanism. The interaction between envelope glycoprotein E2 and host apolipoprotein E/APOE allows the proper assembly, maturation and infectivity of the viral particles. This interaction is probably promoted via the up-regulation of cellular autophagy by the virus. E1/E2 heterodimer binds host apolipoproteins such as APOB and APOE thereby forming a lipo-viro-particle (LVP). APOE associated to the LVP allows the initial virus attachment to cell surface receptors such as the heparan sulfate proteoglycans (HSPGs), syndecan-1 (SDC1), syndecan-1 (SDC2), the low-density lipoprotein receptor (LDLR) and scavenger receptor class B type I (SCARB1). The cholesterol transfer activity of SCARB1 allows E2 exposure and binding of E2 to SCARB1 and the tetraspanin CD81. E1/E2 heterodimer binding on CD81 activates the epithelial growth factor receptor (EGFR) signaling pathway. Diffusion of the complex E1-E2-EGFR-SCARB1-CD81 to the cell lateral membrane allows further interaction with Claudin 1 (CLDN1) and occludin (OCLN) to finally trigger HCV entry. Inhibits host EIF2AK2/PKR activation, preventing the establishment of an antiviral state. Viral ligand for CD209/DC-SIGN and CLEC4M/DC-SIGNR, which are respectively found on dendritic cells (DCs), and on liver sinusoidal endothelial cells and macrophage-like cells of lymph node sinuses. These interactions allow the capture of circulating HCV particles by these cells and subsequent facilitated transmission to permissive cells such as hepatocytes and lymphocyte subpopulations. The interaction between E2 and host amino acid transporter complex formed by SLC3A2 and SLC7A5/LAT1 may facilitate viral entry into host cell. Its function is as follows. Ion channel protein that acts as a viroporin and plays an essential role in the assembly, envelopment and secretion of viral particles. Regulates the host cell secretory pathway, which induces the intracellular retention of viral glycoproteins and favors assembly of viral particles. Creates a pore in acidic organelles and releases Ca(2+) and H(+) in the cytoplasm of infected cells, leading to a productive viral infection. High levels of cytoplasmic Ca(2+) may trigger membrane trafficking and transport of viral ER-associated proteins to viroplasms, sites of viral genome replication. This ionic imbalance induces the assembly of the inflammasome complex, which triggers the maturation of pro-IL-1beta into IL-1beta through the action of caspase-1. Targets also host mitochondria and induces mitochondrial depolarization. In addition of its role as a viroporin, acts as a lipid raft adhesion factor. Functionally, cysteine protease required for the proteolytic auto-cleavage between the non-structural proteins NS2 and NS3. The N-terminus of NS3 is required for the function of NS2 protease (active region NS2-3). Promotes the initiation of viral particle assembly by mediating the interaction between structural and non-structural proteins. Displays three enzymatic activities: serine protease with a chymotrypsin-like fold, NTPase and RNA helicase. NS3 serine protease, in association with NS4A, is responsible for the cleavages of NS3-NS4A, NS4A-NS4B, NS4B-NS5A and NS5A-NS5B. The NS3/NS4A complex prevents phosphorylation of host IRF3, thus preventing the establishment of dsRNA induced antiviral state. The NS3/NS4A complex induces host amino acid transporter component SLC3A2, thus contributing to HCV propagation. NS3 RNA helicase binds to RNA and unwinds both dsDNA and dsRNA in the 3' to 5' direction, and likely resolves RNA complicated stable secondary structures in the template strand. Binds a single ATP and catalyzes the unzipping of a single base pair of dsRNA. Inhibits host antiviral proteins TBK1 and IRF3 thereby preventing the establishment of an antiviral state. Cleaves host MAVS/CARDIF thereby preventing the establishment of an antiviral state. Cleaves host TICAM1/TRIF, thereby disrupting TLR3 signaling and preventing the establishment of an antiviral state. In terms of biological role, the NS3/NS4A complex prevents phosphorylation of host IRF3, thus preventing the establishment of dsRNA induced antiviral state. The NS3/NS4A complex induces host amino acid transporter component SLC3A2, thus contributing to HCV propagation. Its function is as follows. Induces a specific membrane alteration that serves as a scaffold for the virus replication complex. This membrane alteration gives rise to the so-called ER-derived membranous web that contains the replication complex. NS4B self-interaction contributes to its function in membranous web formation. Promotes host TRIF protein degradation in a CASP8-dependent manner thereby inhibiting host TLR3-mediated interferon signaling. Disrupts the interaction between STING and TBK1 contributing to the inhibition of interferon signaling. Functionally, phosphorylated protein that is indispensable for viral replication and assembly. Both hypo- and hyperphosphorylated states are required for the viral life cycle. The hyperphosphorylated form of NS5A is an inhibitor of viral replication. Involved in RNA-binding and especially in binding to the viral genome. Zinc is essential for RNA-binding. Participates in the viral particle production as a result of its interaction with the mature viral core protein. Its interaction with host VAPB may target the viral replication complex to vesicles. Down-regulates viral IRES translation initiation. Mediates interferon resistance, presumably by interacting with and inhibiting host EIF2AK2/PKR. Prevents BIN1-induced apoptosis. Acts as a transcriptional activator of some host genes important for viral replication when localized in the nucleus. Via the interaction with host PACSIN2, modulates lipid droplet formation in order to promote virion assembly. Modulates TNFRSF21/DR6 signaling pathway for viral propagation. RNA-dependent RNA polymerase that performs primer-template recognition and RNA synthesis during viral replication. Initiates RNA transcription/replication at a flavin adenine dinucleotide (FAD), resulting in a 5'- FAD cap on viral RNAs. In this way, recognition of viral 5' RNA by host pattern recognition receptors can be bypassed, thereby evading activation of antiviral pathways. This Homo sapiens (Human) protein is Genome polyprotein.